Reading from the N-terminus, the 189-residue chain is Elongation factor P (189 aa).

Residue Lys-34 is modified to N6-(3,6-diaminohexanoyl)-5-hydroxylysine.

The protein belongs to the elongation factor P family. In terms of processing, may be beta-lysylated on the epsilon-amino group of Lys-34 by the combined action of EpmA and EpmB, and then hydroxylated on the C5 position of the same residue by EpmC (if this protein is present). Lysylation is critical for the stimulatory effect of EF-P on peptide-bond formation. The lysylation moiety may extend toward the peptidyltransferase center and stabilize the terminal 3-CCA end of the tRNA. Hydroxylation of the C5 position on Lys-34 may allow additional potential stabilizing hydrogen-bond interactions with the P-tRNA.

Its subcellular location is the cytoplasm. It functions in the pathway protein biosynthesis; polypeptide chain elongation. Functionally, involved in peptide bond synthesis. Alleviates ribosome stalling that occurs when 3 or more consecutive Pro residues or the sequence PPG is present in a protein, possibly by augmenting the peptidyl transferase activity of the ribosome. Modification of Lys-34 is required for alleviation. The protein is Elongation factor P of Legionella pneumophila (strain Paris).